A 359-amino-acid chain; its full sequence is Putative nucleotidyltransferase MAB21L1 (359 aa).

Residues 23–24 and 63–66 each bind a ribonucleoside 5'-triphosphate; these read RK and FEGL. Mg(2+)-binding residues include E73 and E75. A ribonucleoside 5'-triphosphate-binding positions include K248 and 252–255; that span reads SLLK.

This sequence belongs to the mab-21 family. Monomer. Homodecamer; composed of 2 back to back homopentamers. The protein may exist as monomer in solution and oiligomerizes upon ligand binding.

It localises to the nucleus. Its function is as follows. Putative nucleotidyltransferase required for several aspects of embryonic development including normal development of the eye. It is unclear whether it displays nucleotidyltransferase activity in vivo. Binds single-stranded RNA (ssRNA). The sequence is that of Putative nucleotidyltransferase MAB21L1 (mab21l1) from Danio rerio (Zebrafish).